The sequence spans 540 residues: Light-independent protochlorophyllide reductase subunit B (540 aa).

[4Fe-4S] cluster is bound at residue aspartate 36. The active-site Proton donor is aspartate 287. 422-423 (GL) provides a ligand contact to substrate.

Belongs to the ChlB/BchB/BchZ family. As to quaternary structure, protochlorophyllide reductase is composed of three subunits; BchL, BchN and BchB. Forms a heterotetramer of two BchB and two BchN subunits. [4Fe-4S] cluster serves as cofactor.

It carries out the reaction chlorophyllide a + oxidized 2[4Fe-4S]-[ferredoxin] + 2 ADP + 2 phosphate = protochlorophyllide a + reduced 2[4Fe-4S]-[ferredoxin] + 2 ATP + 2 H2O. The protein operates within porphyrin-containing compound metabolism; bacteriochlorophyll biosynthesis (light-independent). Its function is as follows. Component of the dark-operative protochlorophyllide reductase (DPOR) that uses Mg-ATP and reduced ferredoxin to reduce ring D of protochlorophyllide (Pchlide) to form chlorophyllide a (Chlide). This reaction is light-independent. The NB-protein (BchN-BchB) is the catalytic component of the complex. This Rhodopseudomonas palustris (strain TIE-1) protein is Light-independent protochlorophyllide reductase subunit B.